We begin with the raw amino-acid sequence, 98 residues long: NADH-ubiquinone oxidoreductase chain 4L (98 aa).

A run of 3 helical transmembrane segments spans residues Met1–Met21, Ser29–Met49, and Ile61–Ile81.

It belongs to the complex I subunit 4L family. In terms of assembly, core subunit of respiratory chain NADH dehydrogenase (Complex I) which is composed of 45 different subunits.

The protein resides in the mitochondrion inner membrane. It carries out the reaction a ubiquinone + NADH + 5 H(+)(in) = a ubiquinol + NAD(+) + 4 H(+)(out). In terms of biological role, core subunit of the mitochondrial membrane respiratory chain NADH dehydrogenase (Complex I) which catalyzes electron transfer from NADH through the respiratory chain, using ubiquinone as an electron acceptor. Part of the enzyme membrane arm which is embedded in the lipid bilayer and involved in proton translocation. The chain is NADH-ubiquinone oxidoreductase chain 4L (MT-ND4L) from Procyon lotor (Raccoon).